Reading from the N-terminus, the 201-residue chain is FMN-dependent NADH:quinone oxidoreductase (201 aa).

FMN-binding positions include Ser10, Ser16–Ser18, Met96–Phe99, and Ser140–Gly143.

The protein belongs to the azoreductase type 1 family. In terms of assembly, homodimer. Requires FMN as cofactor.

The enzyme catalyses 2 a quinone + NADH + H(+) = 2 a 1,4-benzosemiquinone + NAD(+). It catalyses the reaction N,N-dimethyl-1,4-phenylenediamine + anthranilate + 2 NAD(+) = 2-(4-dimethylaminophenyl)diazenylbenzoate + 2 NADH + 2 H(+). Its function is as follows. Quinone reductase that provides resistance to thiol-specific stress caused by electrophilic quinones. In terms of biological role, also exhibits azoreductase activity. Catalyzes the reductive cleavage of the azo bond in aromatic azo compounds to the corresponding amines. This Salmonella choleraesuis (strain SC-B67) protein is FMN-dependent NADH:quinone oxidoreductase.